The following is a 326-amino-acid chain: Flap endonuclease 1 (326 aa).

Residues 1-98 are N-domain; the sequence is MGVQFGDFIP…KTRKVRREMK (98 aa). Residues aspartate 27, aspartate 80, glutamate 152, glutamate 154, aspartate 173, aspartate 175, and aspartate 224 each contribute to the Mg(2+) site. The interval 116–245 is I-domain; the sequence is EAAKYAKRVS…KRAYELVRSG (130 aa). The tract at residues 317–325 is interaction with PCNA; that stretch reads KQKTLDAWF.

This sequence belongs to the XPG/RAD2 endonuclease family. FEN1 subfamily. As to quaternary structure, interacts with PCNA. PCNA stimulates the nuclease activity without altering cleavage specificity. It depends on Mg(2+) as a cofactor.

Functionally, structure-specific nuclease with 5'-flap endonuclease and 5'-3' exonuclease activities involved in DNA replication and repair. During DNA replication, cleaves the 5'-overhanging flap structure that is generated by displacement synthesis when DNA polymerase encounters the 5'-end of a downstream Okazaki fragment. Binds the unpaired 3'-DNA end and kinks the DNA to facilitate 5' cleavage specificity. Cleaves one nucleotide into the double-stranded DNA from the junction in flap DNA, leaving a nick for ligation. Also involved in the base excision repair (BER) pathway. Acts as a genome stabilization factor that prevents flaps from equilibrating into structures that lead to duplications and deletions. Also possesses 5'-3' exonuclease activity on nicked or gapped double-stranded DNA. In Methanocaldococcus jannaschii (strain ATCC 43067 / DSM 2661 / JAL-1 / JCM 10045 / NBRC 100440) (Methanococcus jannaschii), this protein is Flap endonuclease 1.